A 248-amino-acid polypeptide reads, in one-letter code: Ribonuclease 3 (248 aa).

Residues 15-142 (LKAFFKQYHV…MIAALYLDLG (128 aa)) form the RNase III domain. Glu-55 lines the Mg(2+) pocket. The active site involves Asp-59. Residues Asp-128 and Glu-131 each contribute to the Mg(2+) site. Glu-131 is an active-site residue. Residues 169–240 (DYKTELQEFL…ARDALQKLAT (72 aa)) form the DRBM domain.

Belongs to the ribonuclease III family. As to quaternary structure, homodimer. Mg(2+) is required as a cofactor.

It localises to the cytoplasm. The catalysed reaction is Endonucleolytic cleavage to 5'-phosphomonoester.. Its function is as follows. Digests double-stranded RNA. Involved in the processing of primary rRNA transcript to yield the immediate precursors to the large and small rRNAs (23S and 16S). Processes some mRNAs, and tRNAs when they are encoded in the rRNA operon. Processes pre-crRNA and tracrRNA of type II CRISPR loci if present in the organism. This chain is Ribonuclease 3, found in Spiroplasma citri.